We begin with the raw amino-acid sequence, 602 residues long: Isocitrate dehydrogenase kinase/phosphatase (602 aa).

Residues 327-333 (APGIKGM) and K348 contribute to the ATP site. D383 is an active-site residue.

It belongs to the AceK family.

The protein localises to the cytoplasm. The catalysed reaction is L-seryl-[isocitrate dehydrogenase] + ATP = O-phospho-L-seryl-[isocitrate dehydrogenase] + ADP + H(+). Bifunctional enzyme which can phosphorylate or dephosphorylate isocitrate dehydrogenase (IDH) on a specific serine residue. This is a regulatory mechanism which enables bacteria to bypass the Krebs cycle via the glyoxylate shunt in response to the source of carbon. When bacteria are grown on glucose, IDH is fully active and unphosphorylated, but when grown on acetate or ethanol, the activity of IDH declines drastically concomitant with its phosphorylation. This Paraburkholderia phymatum (strain DSM 17167 / CIP 108236 / LMG 21445 / STM815) (Burkholderia phymatum) protein is Isocitrate dehydrogenase kinase/phosphatase.